The chain runs to 178 residues: MDLLLLLFSALWYILPAYVANAVPCILGGGKPVDFGKNFFDGNRIIGNGVTYRGTFFGILFGIITGILQHFIVILYMGPKSVFNYGLTGYIILSFLLATGALFGDMLGSFIKRRFNLNQGQSAPLLDQITFIIFALLFAYSLYPVPANIIVLLLVISPIIHFSSNIIAYKLHLKKVWW.

The next 5 helical transmembrane spans lie at 3–23 (LLLL…ANAV), 56–76 (FFGI…VILY), 91–111 (IILS…GSFI), 131–151 (FIIF…NIIV), and 152–172 (LLLV…YKLH).

This sequence belongs to the CDP-archaeol synthase family. Requires Mg(2+) as cofactor.

It is found in the cell membrane. It catalyses the reaction 2,3-bis-O-(geranylgeranyl)-sn-glycerol 1-phosphate + CTP + H(+) = CDP-2,3-bis-O-(geranylgeranyl)-sn-glycerol + diphosphate. The protein operates within membrane lipid metabolism; glycerophospholipid metabolism. Its function is as follows. Catalyzes the formation of CDP-2,3-bis-(O-geranylgeranyl)-sn-glycerol (CDP-archaeol) from 2,3-bis-(O-geranylgeranyl)-sn-glycerol 1-phosphate (DGGGP) and CTP. This reaction is the third ether-bond-formation step in the biosynthesis of archaeal membrane lipids. This chain is CDP-archaeol synthase, found in Methanococcus maripaludis (strain DSM 14266 / JCM 13030 / NBRC 101832 / S2 / LL).